We begin with the raw amino-acid sequence, 442 residues long: 3-dehydroquinate synthase, chloroplastic (442 aa).

A chloroplast-targeting transit peptide spans 1–61 (MASSFCPKQA…TTRLKVLATS (61 aa)). NAD(+) is bound by residues Asn-119, 150 to 152 (DGE), Lys-155, 183 to 188 (GGVIGD), 208 to 209 (TT), Lys-221, Lys-230, and 248 to 251 (TLNT). Glu-263 is an a divalent metal cation binding site. Lys-305 contacts NAD(+). A divalent metal cation contacts are provided by His-326 and His-343.

The protein belongs to the sugar phosphate cyclases superfamily. Dehydroquinate synthase family. As to quaternary structure, homodimer. The cofactor is a divalent metal cation. It depends on NAD(+) as a cofactor. As to expression, highly expressed in roots. Lower expression in stems, flowers and cotyledons. Barely detected in leaves.

It is found in the plastid. The protein resides in the chloroplast. It catalyses the reaction 7-phospho-2-dehydro-3-deoxy-D-arabino-heptonate = 3-dehydroquinate + phosphate. The protein operates within metabolic intermediate biosynthesis; chorismate biosynthesis; chorismate from D-erythrose 4-phosphate and phosphoenolpyruvate: step 2/7. Its function is as follows. Catalyzes the second step in the shikimate pathway. The chain is 3-dehydroquinate synthase, chloroplastic (DHQS) from Solanum lycopersicum (Tomato).